We begin with the raw amino-acid sequence, 95 residues long: Co-chaperonin GroES (95 aa).

The protein belongs to the GroES chaperonin family. In terms of assembly, heptamer of 7 subunits arranged in a ring. Interacts with the chaperonin GroEL.

It localises to the cytoplasm. Functionally, together with the chaperonin GroEL, plays an essential role in assisting protein folding. The GroEL-GroES system forms a nano-cage that allows encapsulation of the non-native substrate proteins and provides a physical environment optimized to promote and accelerate protein folding. GroES binds to the apical surface of the GroEL ring, thereby capping the opening of the GroEL channel. This is Co-chaperonin GroES from Oleidesulfovibrio alaskensis (strain ATCC BAA-1058 / DSM 17464 / G20) (Desulfovibrio alaskensis).